Here is a 370-residue protein sequence, read N- to C-terminus: Trans-enoyl reductase xenG (370 aa).

Residues 1 to 32 form a disordered region; that stretch reads MASTGLPQLPPSQKAVIQSEKTPGAFEVSENR. NADP(+) is bound by residues 54-57, 177-180, 200-203, tyrosine 218, 265-266, and 356-357; these read CDWK, STAS, SPKN, FE, and VS.

It belongs to the zinc-containing alcohol dehydrogenase family. As to quaternary structure, monomer.

Its pathway is mycotoxin biosynthesis. Its function is as follows. Trans-enoyl reductase; part of the gene cluster that mediates the biosynthesis of xenoacremones such as xenoacremone A, a compound that shows inhibitory activity toward the PI3K/AKT signaling pathway and which has the ability to induce apoptosis of A549 lung cancer cells. Within the pathway, cooperation of the hybrid PKS-NRPS xenE and the trans-acting enoyl reductase xenG is responsible for the formation of the reduced tyrosine-nonaketide derivative. The alpha/beta hydrolase xenA then accelerates intramolecular nucleophilic attack to give a pyrrolidone derivative. Subsequently, three enzymes, xenF, xenD, and xenC, coordinately participate in the conversion to xenoacremone B. XenF catalyzes sigmatropic rearrangement to form an A-ring, which leads to an unusual intermediate with a hexane ring, which is required for the formation of the tricarbocyclic product. Epoxidation catalyzed by xenD and the formation of the paracyclophane ether catalyzed by xenC initiate a spontaneous intramolecular Diels-Alder (IMDA) reaction to yield xenoacremone B. Spontaneous hydration of xenoacremone B leads to the formation of xenoacremone A, which undergoes subsequent methylation to afford xenoacremone C. This is Trans-enoyl reductase xenG from Xenoacremonium sinensis (Endophyte fungus).